A 327-amino-acid polypeptide reads, in one-letter code: Succinylglutamate desuccinylase (327 aa).

Positions 53, 56, and 146 each coordinate Zn(2+). Glu209 is an active-site residue.

The protein belongs to the AspA/AstE family. Succinylglutamate desuccinylase subfamily. Requires Zn(2+) as cofactor.

The catalysed reaction is N-succinyl-L-glutamate + H2O = L-glutamate + succinate. It participates in amino-acid degradation; L-arginine degradation via AST pathway; L-glutamate and succinate from L-arginine: step 5/5. In terms of biological role, transforms N(2)-succinylglutamate into succinate and glutamate. This Serratia proteamaculans (strain 568) protein is Succinylglutamate desuccinylase.